The primary structure comprises 317 residues: 1-phosphatidylinositol phosphodiesterase (317 aa).

Residues 1–22 (MYKNYLQRTLVLLLCFILYFFT) form the signal peptide. The PI-PLC X-box domain maps to 58–196 (LAALSIPGTH…LKDVRGKILL (139 aa)). The Proton acceptor role is filled by H67. Catalysis depends on H115, which acts as the Proton donor.

In terms of assembly, monomer.

Its subcellular location is the secreted. It is found in the cytoplasm. It carries out the reaction a 1,2-diacyl-sn-glycero-3-phospho-(1D-myo-inositol) = 1D-myo-inositol 1,2-cyclic phosphate + a 1,2-diacyl-sn-glycerol. In terms of biological role, cleaves glycosylphosphatidylinositol (GPI) and phosphatidylinositol (PI) anchors but not PI phosphates. Important factor in pathogenesis, PI-PLC activity is present only in virulent listeria species. It may participate in the lysis of the phagolysosomal membrane. In Listeria monocytogenes serovar 1/2a (strain ATCC BAA-679 / EGD-e), this protein is 1-phosphatidylinositol phosphodiesterase (plcA).